The sequence spans 303 residues: Biphenyl-2,3-diol 1,2-dioxygenase (303 aa).

2 VOC domains span residues 5–119 and 143–264; these read SLGY…IYYG and GLGH…YGWS. Fe cation contacts are provided by His146, His210, and Glu260. The interval 283-303 is disordered; it reads WGHKSVRDKALRATKHEQQPE. The span at 287 to 303 shows a compositional bias: basic and acidic residues; the sequence is SVRDKALRATKHEQQPE.

It belongs to the extradiol ring-cleavage dioxygenase family. Homooctamer. It depends on Fe(2+) as a cofactor.

It carries out the reaction biphenyl-2,3-diol + O2 = 2-hydroxy-6-oxo-6-phenylhexa-2,4-dienoate + H(+). It participates in xenobiotic degradation; biphenyl degradation; 2-hydroxy-2,4-pentadienoate and benzoate from biphenyl: step 3/4. In Metapseudomonas furukawaii (Pseudomonas furukawaii), this protein is Biphenyl-2,3-diol 1,2-dioxygenase (bphC).